A 29-amino-acid chain; its full sequence is Cytochrome b6-f complex subunit 8 (29 aa).

The chain crosses the membrane as a helical span at residues 3-23 (ILTLGWVSILALFTWSIAMVV).

Belongs to the PetN family. In terms of assembly, the 4 large subunits of the cytochrome b6-f complex are cytochrome b6, subunit IV (17 kDa polypeptide, PetD), cytochrome f and the Rieske protein, while the 4 small subunits are PetG, PetL, PetM and PetN. The complex functions as a dimer.

It is found in the cellular thylakoid membrane. Functionally, component of the cytochrome b6-f complex, which mediates electron transfer between photosystem II (PSII) and photosystem I (PSI), cyclic electron flow around PSI, and state transitions. The polypeptide is Cytochrome b6-f complex subunit 8 (Microcystis aeruginosa (strain NIES-843 / IAM M-2473)).